A 218-amino-acid polypeptide reads, in one-letter code: Cytidylate kinase (218 aa).

10-18 (GPAGSGKST) contacts ATP.

Belongs to the cytidylate kinase family. Type 1 subfamily.

Its subcellular location is the cytoplasm. The catalysed reaction is CMP + ATP = CDP + ADP. It carries out the reaction dCMP + ATP = dCDP + ADP. The chain is Cytidylate kinase from Fusobacterium nucleatum subsp. nucleatum (strain ATCC 25586 / DSM 15643 / BCRC 10681 / CIP 101130 / JCM 8532 / KCTC 2640 / LMG 13131 / VPI 4355).